A 321-amino-acid chain; its full sequence is Glucokinase (321 aa).

8–13 (GDVGGT) contacts ATP.

It belongs to the bacterial glucokinase family.

The protein resides in the cytoplasm. The enzyme catalyses D-glucose + ATP = D-glucose 6-phosphate + ADP + H(+). In Escherichia coli O127:H6 (strain E2348/69 / EPEC), this protein is Glucokinase.